Consider the following 224-residue polypeptide: Precorrin-2 dehydrogenase (224 aa).

Residues 26–27 (SV) and 47–50 (EFSQ) contribute to the NAD(+) site.

This sequence belongs to the precorrin-2 dehydrogenase / sirohydrochlorin ferrochelatase family. As to quaternary structure, homodimer.

It carries out the reaction precorrin-2 + NAD(+) = sirohydrochlorin + NADH + 2 H(+). The protein operates within porphyrin-containing compound metabolism; siroheme biosynthesis; sirohydrochlorin from precorrin-2: step 1/1. In terms of biological role, involved in the archaeal biosynthesis of heme. Catalyzes the oxiation of precorrin-2 into sirohydroclorin. The sequence is that of Precorrin-2 dehydrogenase from Methanosarcina barkeri (strain Fusaro / DSM 804).